Consider the following 286-residue polypeptide: 4-diphosphocytidyl-2-C-methyl-D-erythritol kinase (286 aa).

Lys-13 is an active-site residue. 99 to 109 (PMGGGLGGGSS) contributes to the ATP binding site. Asp-141 is a catalytic residue.

This sequence belongs to the GHMP kinase family. IspE subfamily.

The enzyme catalyses 4-CDP-2-C-methyl-D-erythritol + ATP = 4-CDP-2-C-methyl-D-erythritol 2-phosphate + ADP + H(+). Its pathway is isoprenoid biosynthesis; isopentenyl diphosphate biosynthesis via DXP pathway; isopentenyl diphosphate from 1-deoxy-D-xylulose 5-phosphate: step 3/6. Catalyzes the phosphorylation of the position 2 hydroxy group of 4-diphosphocytidyl-2C-methyl-D-erythritol. The chain is 4-diphosphocytidyl-2-C-methyl-D-erythritol kinase from Herminiimonas arsenicoxydans.